The chain runs to 671 residues: Probable potassium transport system protein Kup 2 (671 aa).

A run of 12 helical transmembrane segments spans residues phenylalanine 12–tyrosine 32, isoleucine 56–leucine 76, tryptophan 99–proline 119, isoleucine 139–phenylalanine 159, alanine 172–leucine 192, valine 218–serine 238, serine 251–leucine 271, leucine 296–glycine 316, isoleucine 345–phenylalanine 365, alanine 374–leucine 394, proline 400–isoleucine 420, and glycine 429–tyrosine 449.

This sequence belongs to the HAK/KUP transporter (TC 2.A.72) family.

It localises to the cell membrane. The enzyme catalyses K(+)(in) + H(+)(in) = K(+)(out) + H(+)(out). Transport of potassium into the cell. Likely operates as a K(+):H(+) symporter. The sequence is that of Probable potassium transport system protein Kup 2 from Lactobacillus acidophilus (strain ATCC 700396 / NCK56 / N2 / NCFM).